A 198-amino-acid chain; its full sequence is Elongation factor Ts (198 aa).

Residues 81–84 form an involved in Mg(2+) ion dislocation from EF-Tu region; sequence TDFV.

Belongs to the EF-Ts family.

The protein localises to the cytoplasm. Associates with the EF-Tu.GDP complex and induces the exchange of GDP to GTP. It remains bound to the aminoacyl-tRNA.EF-Tu.GTP complex up to the GTP hydrolysis stage on the ribosome. This is Elongation factor Ts from Dictyoglomus thermophilum (strain ATCC 35947 / DSM 3960 / H-6-12).